The primary structure comprises 409 residues: Chaetoglobosin A biosynthesis cluster protein C (409 aa).

The HTH CENPB-type domain occupies Asp51–Arg120. The H-T-H motif DNA-binding region spans Arg84–Arg113. Disordered stretches follow at residues Pro243 to Ser269 and Ala320 to Leu350. The segment covering Pro255–Ser269 has biased composition (polar residues).

The protein resides in the nucleus. Functionally, part of the gene cluster that mediates the biosynthesis of chaetoglobosin A which has a unique inhibitory activity against actin polymerization in mammalian cells. Chaetoglobosin A and its intermediates are involved in the morphological differentiation of C.globosum. The first step of the pathway is the synthesis of prochaetoglobosin I via condensation of one acetyl-CoA, 8 malonyl-CoA, and a L-tryptophan molecule by the PKS-NRPS hybrid synthetase cheA, followed by reduction of backbone double bond to install desired geometry by the enoyl reductase cheB. Further multiple oxidation steps performed by the cytochrome P450 monooxygenases cheE and cheG, as well as by the FAD-linked oxidoreductase cheF, lead to the formation of chaetoglobosin A. Depending on the order of action of these reductases, distinct intermediates can be identified. Within the pathway, the cytochrome P450 monooxygenase cheE catalyzes a stereospecific epoxidation on prochaetoglobosin I, cytoglobosin D, and chaetoglobosin J intermediates. The FAD-linked oxidoreductase cheF performs dehydrogenation of the C-20 hydroxyl groups in the 20-dihyrochaetoglobosin A and cytoglobosin D intermediates. Finally, the cytochrome P450 monooxygenase cheG can catalyze the stereospecific dihydroxylation of prochaetoglobosin I and prochaetoglobosin IV at C-19 and C-20, respectively. The Diels-Alderase cheD may play a role in the post-PKS-NRPS biosynthetic steps catalyzing Diels-Alder cyclization. In Chaetomium globosum (strain ATCC 6205 / CBS 148.51 / DSM 1962 / NBRC 6347 / NRRL 1970) (Soil fungus), this protein is Chaetoglobosin A biosynthesis cluster protein C.